The chain runs to 461 residues: Serine/threonine-protein kinase VHS1 (461 aa).

One can recognise a Protein kinase domain in the interval 12-337; the sequence is YLITSQIGEG…KEVSSITSFT (326 aa). Residues 18-26 and Lys41 each bind ATP; that span reads IGEGAYGLV. Residue Asp185 is the Proton acceptor of the active site. The segment at 384-433 is disordered; that stretch reads LSYTSSSEEEDGIKEGIDDDNGSRSGSFGTLDTDTGLHSSFTSTSCESDN. The segment covering 390-403 has biased composition (acidic residues); it reads SEEEDGIKEGIDDD. Over residues 406–433 the composition is skewed to polar residues; it reads SRSGSFGTLDTDTGLHSSFTSTSCESDN.

This sequence belongs to the protein kinase superfamily. Ser/Thr protein kinase family.

The protein resides in the cytoplasm. It carries out the reaction L-seryl-[protein] + ATP = O-phospho-L-seryl-[protein] + ADP + H(+). The catalysed reaction is L-threonyl-[protein] + ATP = O-phospho-L-threonyl-[protein] + ADP + H(+). In terms of biological role, probable serine/threonine protein kinase involved in the G1-S transition. This chain is Serine/threonine-protein kinase VHS1 (VHS1), found in Saccharomyces cerevisiae (strain ATCC 204508 / S288c) (Baker's yeast).